The chain runs to 421 residues: Nuclear envelope integral membrane protein 2 (421 aa).

The N-terminal stretch at Met-1–Ala-22 is a signal peptide. 5 helical membrane passes run Asn-147–Ala-167, Val-175–Leu-195, Thr-206–Met-226, Leu-232–Phe-252, and Leu-279–Leu-299.

The protein belongs to the NEMP family.

The protein resides in the nucleus inner membrane. This is Nuclear envelope integral membrane protein 2 (Nemp2) from Rattus norvegicus (Rat).